Consider the following 213-residue polypeptide: CDP-diacylglycerol--inositol 3-phosphatidyltransferase (213 aa).

Over 1-5 (MPEEN) the chain is Cytoplasmic. The chain crosses the membrane as a helical span at residues 6–26 (IFLFVPNLIGYARIVFAIISF). Tyr27 is a topological domain (lumenal). A helical transmembrane segment spans residues 28 to 48 (FMPCCPFTASSFYLLSGLLDA). Asp47 and Asp50 together coordinate Mg(2+). Residues 49 to 73 (FDGHAARALNQGTRFGAMLDMLTDR) lie on the Cytoplasmic side of the membrane. Residues Gly51, Arg55, and Thr61 each coordinate a CDP-1,2-diacyl-sn-glycerol. Mg(2+)-binding residues include Asp68 and Asp72. Residue Asp72 is the Proton acceptor of the active site. A helical transmembrane segment spans residues 74-94 (CATMCLLVNLALLYPRATLLF). Position 95 (Gln95) is a topological domain, lumenal. Residues 96-116 (LSMSLDVASHWLHLHSSVVRG) form a helical membrane-spanning segment. Over 117–139 (SESHKMIDLSGNPVLRIYYTSRP) the chain is Cytoplasmic. A helical transmembrane segment spans residues 140-160 (ALFTLCAGNELFYCLLYLFNF). At 161–174 (SEGPLVGSVGLFRM) the chain is on the lumenal side. The chain crosses the membrane as a helical span at residues 175 to 195 (GLWITAPIALLKSIISVIHLV). The Cytoplasmic segment spans residues 196–213 (TAARNMAALDAADRAKKK).

This sequence belongs to the CDP-alcohol phosphatidyltransferase class-I family. The cofactor is Mn(2+). Requires Mg(2+) as cofactor. Detected in liver (at protein level). Widely expressed. Highly expressed in the brain and kidney; lower levels in heart, spleen, lung, liver, skeletal muscle and testis.

The protein resides in the endoplasmic reticulum membrane. It localises to the cell membrane. The catalysed reaction is a CDP-1,2-diacyl-sn-glycerol + myo-inositol = a 1,2-diacyl-sn-glycero-3-phospho-(1D-myo-inositol) + CMP + H(+). In terms of biological role, catalyzes the biosynthesis of phosphatidylinositol (PtdIns) as well as PtdIns:inositol exchange reaction. May thus act to reduce an excessive cellular PtdIns content. The exchange activity is due to the reverse reaction of PtdIns synthase and is dependent on CMP, which is tightly bound to the enzyme. This chain is CDP-diacylglycerol--inositol 3-phosphatidyltransferase, found in Rattus norvegicus (Rat).